We begin with the raw amino-acid sequence, 378 residues long: Chaperone protein DnaJ (378 aa).

Residues 5 to 69 (DYYEVLGVSK…NKRANYDQFG (65 aa)) enclose the J domain. Residues 135 to 217 (GSEKEISIRK…CHGKGTENKN (83 aa)) form a CR-type zinc finger. Cys-148, Cys-151, Cys-165, Cys-168, Cys-191, Cys-194, Cys-205, and Cys-208 together coordinate Zn(2+). CXXCXGXG motif repeat units lie at residues 148 to 155 (CHTCDGEG), 165 to 172 (CHYCNGSG), 191 to 198 (CPVCSGSG), and 205 to 212 (CPTCHGKG).

It belongs to the DnaJ family. As to quaternary structure, homodimer. Zn(2+) is required as a cofactor.

The protein localises to the cytoplasm. In terms of biological role, participates actively in the response to hyperosmotic and heat shock by preventing the aggregation of stress-denatured proteins and by disaggregating proteins, also in an autonomous, DnaK-independent fashion. Unfolded proteins bind initially to DnaJ; upon interaction with the DnaJ-bound protein, DnaK hydrolyzes its bound ATP, resulting in the formation of a stable complex. GrpE releases ADP from DnaK; ATP binding to DnaK triggers the release of the substrate protein, thus completing the reaction cycle. Several rounds of ATP-dependent interactions between DnaJ, DnaK and GrpE are required for fully efficient folding. Also involved, together with DnaK and GrpE, in the DNA replication of plasmids through activation of initiation proteins. In Staphylococcus saprophyticus subsp. saprophyticus (strain ATCC 15305 / DSM 20229 / NCIMB 8711 / NCTC 7292 / S-41), this protein is Chaperone protein DnaJ.